The following is a 1184-amino-acid chain: MSGSSAGSSFVHLHNHTEYSMLDGAAKITPMLAEVERLGMPAVGMTDHGNMFGASEFYNSATKAGIKPIIGVEAYIAPGSRFDTRRILWGDPSQKADDVSGSGSYTHLTMMAENATGLRNLFKLSSHASFEGQLSKWSRMDAELIAEHAEGIIITTGCPSGEVQTRLRLGQDREALEAAAKWREIVGPDNYFLELMDHGLTIERRVRDGLLEIGRALNIPPLATNDCHYVTRDAAHNHEALLCVQTGKTLSDPNRFKFDGDGYYLKSAAEMRQIWDDEVPGACDSTLLIAERVQSYADVWTPRDRMPVFPVPDGHDQASWLRHEVDAGLRRRFPAGPPDGYRERAAYEIDVICSKGFPSYFLIVADLISYARSAGIRVGPGRGSAAGSLVAYALGITDIDPIPHGLLFERFLNPERTSMPDIDIDFDDRRRGEMVRYAADKWGHDRVAQVITFGTIKTKAALKDSARIHYGQPGFAIADRITKALPPAIMAKDIPLSGITDPSHERYKEAAEVRGLIETDPDVRTIYQTARGLEGLIRNAGVHACAVIMSSEPLTEAIPLWKRPQDGAIITGWDYPACEAIGLLKMDFLGLRNLTIIGDAIDNVRANRGIDLDLESVPLDDKATYELLGRGDTLGVFQLDGGPMRDLLRRMQPTGFEDVVAVIALYRPGPMGMNAHNDYADRKNNRQAIKPIHPELEEPLREILAETYGLIVYQEQIMRIAQKVASYSLARADILRKAMGKKKREVLEKEFEGFSDGMQANGFSPAAIKALWDTILPFADYAFNKSHAAGYGMVSYWTAYLKANYPAEYMAGLLTSVGDDKDKAAVYLADCRKLGITVLPPDVNESGLNFASVGQDIRYGLGAVRNVGANVVGSLLQTRNDKGKFTDFSDYLNKIDISACNKKVTESLIKAGAFDSLGHARKGLFLVHSDAVDSVLGTKKAEALGQFDLFGSNDDGTGTADPVFTIKVPDDEWEDKHKLALEREMLGLYVSGHPLNGVAHLLAAQVDTAIPAILDGDVPNDAQVRVGGILASVNRRVNKNGMPWASAQLEDLTGGIEVMFFPHTYSSYGADIVDDAVVLVNAKVAVRDDRIALIANDLTVPDFSNAEVERPLAVSLPTRQCTFDKVSALKQVLARHPGTSQVHLRLISGDRITTLALDQSLRVTPSPALMGDLKELLGPGCLGS.

The protein belongs to the DNA polymerase type-C family. DnaE subfamily. The Pol III holoenzyme complex contains at least 10 different subunits organized into 3 functionally essential subassemblies: the Pol III core, the beta sliding clamp processivity factor and the clamp-loading complex. The Pol III core (subunits alpha, epsilon and theta) contains the polymerase and the 3'-5' exonuclease proofreading activities. The polymerase is tethered to the template via the dimeric beta sliding clamp processivity factor. The clamp loader (also called gamma complex) assembles the beta sliding clamp onto the primed template and plays a central role in the organization and communication at the replication fork. The clamp-loading complex contains delta, delta', psi and chi, and 3 copies of either or both of two different DnaX proteins, gamma and tau. The DNA replisome complex has a single clamp loader (3 tau and 1 each of delta, delta', psi and chi subunits) which binds 3 Pol III cores (1 core on the leading strand and 2 on the lagging strand) each with a beta sliding clamp dimer. Interacts with the beta-sliding clamp (DnaN). Co-immunoprecipitates with DarG in the presence and absence of darT.

The protein localises to the cytoplasm. It carries out the reaction DNA(n) + a 2'-deoxyribonucleoside 5'-triphosphate = DNA(n+1) + diphosphate. DNA polymerase III is a complex, multichain enzyme responsible for most of the replicative synthesis in bacteria. Pol III also exhibits 3' to 5' exonuclease activity. The alpha chain is the DNA polymerase. The sequence is that of DNA polymerase III subunit alpha (dnaE1) from Mycobacterium tuberculosis (strain ATCC 25618 / H37Rv).